We begin with the raw amino-acid sequence, 1163 residues long: Actin cross-linking toxin VgrG1 (1163 aa).

Residues 728 to 1163 (TPDFPTHFPK…NPQEWQRIIA (436 aa)) enclose the ACD domain. Position 739–743 (739–743 (SIGIE)) interacts with ATP. 2 residues coordinate Mg(2+): glutamate 743 and glutamate 805. ATP is bound at residue serine 808. Residue glutamine 889 participates in Mg(2+) binding. Arginine 995 provides a ligand contact to ATP. Glutamate 1066 serves as a coordination point for Mg(2+).

It belongs to the VgrG protein family. As to quaternary structure, interacts with protein VC1417. Requires Mg(2+) as cofactor.

The protein localises to the secreted. It is found in the host cytoplasm. Its subcellular location is the host cytosol. In terms of biological role, part of the type VI secretion system (T6SS) specialized secretion system, which delivers several virulence factors in both prokaryotic and eukaryotic cells during infection. Forms the spike at the tip of the elongating tube probably formed by hemolysin co-regulated protein/Hcp. Allows the delivery of the TseL antibacterial toxin to target cells where it exerts its toxicity. Also acts directly as an actin-directed toxin that catalyzes the covalent cross-linking of host cytoplasmic monomeric actin. Mediates the cross-link between 'Lys-50' of one monomer and 'Glu-270' of another actin monomer, resulting in formation of highly toxic actin oligomers that cause cell rounding. The toxin can be highly efficient at very low concentrations by acting on formin homology family proteins: toxic actin oligomers bind with high affinity to formins and adversely affect both nucleation and elongation abilities of formins, causing their potent inhibition in both profilin-dependent and independent manners. Acts as an acid--amino-acid ligase that transfers the gamma-phosphoryl group of ATP to the 'Glu-270' actin residue, resulting in the formation of an activated acyl phosphate intermediate. This intermediate is further hydrolyzed and the energy of hydrolysis is utilized for the formation of the amide bond between actin subunits. This is Actin cross-linking toxin VgrG1 from Vibrio cholerae serotype O1 (strain ATCC 39315 / El Tor Inaba N16961).